The primary structure comprises 175 residues: NADH-ubiquinone oxidoreductase chain 6 (175 aa).

5 helical membrane passes run 1-21 (MMTYIVFILSTVFVVGFVGFS), 27-47 (VYGGVGLIVSGGVGCGIIMNF), 49-69 (GSFLGLMVFLIYLGGMMVVFG), 88-108 (VVFGAFVFGLFMEMLLVLYVL), and 149-169 (YGMWLVVVTGWSLFIAVVVVM).

It belongs to the complex I subunit 6 family. In terms of assembly, core subunit of respiratory chain NADH dehydrogenase (Complex I) which is composed of 45 different subunits.

The protein resides in the mitochondrion inner membrane. The catalysed reaction is a ubiquinone + NADH + 5 H(+)(in) = a ubiquinol + NAD(+) + 4 H(+)(out). Its function is as follows. Core subunit of the mitochondrial membrane respiratory chain NADH dehydrogenase (Complex I) which catalyzes electron transfer from NADH through the respiratory chain, using ubiquinone as an electron acceptor. Essential for the catalytic activity and assembly of complex I. This is NADH-ubiquinone oxidoreductase chain 6 (MT-ND6) from Pteropus scapulatus (Little red flying fox).